A 198-amino-acid chain; its full sequence is Golgi to ER traffic protein 1 (198 aa).

The Lumenal portion of the chain corresponds to 1–6 (MDPFSI). Residues 7-26 (LLTLTLIILAQNAVRIVGKS) traverse the membrane as a helical segment. The Cytoplasmic segment spans residues 27 to 110 (QIHQSIWNLY…AIEKYLGLAI (84 aa)). Residues 73–106 (KWTKLNRKYDQLQTEIKAVSDQVSQQQQAIEKYL) adopt a coiled-coil conformation. The chain crosses the membrane as a helical span at residues 111 to 131 (SVTTTLPLWLFRFKYRKQPLF). Topologically, residues 132-155 (YFPKDTFPSYLEWILSFPSVPQGS) are lumenal. A helical membrane pass occupies residues 156-172 (IGIMFWILLLNKFVSNL). The Cytoplasmic portion of the chain corresponds to 173 to 198 (EFIVKTFSTKVEKPVPIVKVEDLSPK).

It belongs to the WRB/GET1 family. In terms of assembly, component of the Golgi to ER traffic (GET) complex, which is composed of GET1, GET2 and GET3. Within the complex, GET1 and GET2 form a heterotetramer which is stabilized by phosphatidylinositol binding and which binds to the GET3 homodimer.

The protein localises to the endoplasmic reticulum membrane. The protein resides in the golgi apparatus membrane. Functionally, required for the post-translational delivery of tail-anchored (TA) proteins to the endoplasmic reticulum. Together with GET2, acts as a membrane receptor for soluble GET3, which recognizes and selectively binds the transmembrane domain of TA proteins in the cytosol. The GET complex cooperates with the HDEL receptor ERD2 to mediate the ATP-dependent retrieval of resident ER proteins that contain a C-terminal H-D-E-L retention signal from the Golgi to the ER. This chain is Golgi to ER traffic protein 1, found in Komagataella phaffii (strain GS115 / ATCC 20864) (Yeast).